The primary structure comprises 110 residues: Large ribosomal subunit protein uL22 (110 aa).

It belongs to the universal ribosomal protein uL22 family. In terms of assembly, part of the 50S ribosomal subunit.

This protein binds specifically to 23S rRNA; its binding is stimulated by other ribosomal proteins, e.g. L4, L17, and L20. It is important during the early stages of 50S assembly. It makes multiple contacts with different domains of the 23S rRNA in the assembled 50S subunit and ribosome. Its function is as follows. The globular domain of the protein is located near the polypeptide exit tunnel on the outside of the subunit, while an extended beta-hairpin is found that lines the wall of the exit tunnel in the center of the 70S ribosome. The sequence is that of Large ribosomal subunit protein uL22 from Syntrophotalea carbinolica (strain DSM 2380 / NBRC 103641 / GraBd1) (Pelobacter carbinolicus).